The sequence spans 248 residues: 5'-nucleotidase SurE (248 aa).

Residues D8, D9, S39, and N91 each coordinate a divalent metal cation.

Belongs to the SurE nucleotidase family. The cofactor is a divalent metal cation.

It localises to the cytoplasm. It carries out the reaction a ribonucleoside 5'-phosphate + H2O = a ribonucleoside + phosphate. In terms of biological role, nucleotidase that shows phosphatase activity on nucleoside 5'-monophosphates. This is 5'-nucleotidase SurE from Neisseria gonorrhoeae (strain ATCC 700825 / FA 1090).